A 174-amino-acid chain; its full sequence is ATP-dependent protease subunit HslV (174 aa).

The active site involves Thr2. 3 residues coordinate Na(+): Gly157, Cys160, and Thr163.

It belongs to the peptidase T1B family. HslV subfamily. In terms of assembly, a double ring-shaped homohexamer of HslV is capped on each side by a ring-shaped HslU homohexamer. The assembly of the HslU/HslV complex is dependent on binding of ATP.

The protein resides in the cytoplasm. It catalyses the reaction ATP-dependent cleavage of peptide bonds with broad specificity.. With respect to regulation, allosterically activated by HslU binding. Functionally, protease subunit of a proteasome-like degradation complex believed to be a general protein degrading machinery. The polypeptide is ATP-dependent protease subunit HslV (Shewanella oneidensis (strain ATCC 700550 / JCM 31522 / CIP 106686 / LMG 19005 / NCIMB 14063 / MR-1)).